Reading from the N-terminus, the 158-residue chain is Superoxide dismutase [Cu-Zn] (158 aa).

His-46, His-48, and His-63 together coordinate Cu cation. Cys-57 and Cys-149 are oxidised to a cystine. Residues His-63, His-71, His-80, and Asp-83 each contribute to the Zn(2+) site. His-120 provides a ligand contact to Cu cation.

It belongs to the Cu-Zn superoxide dismutase family. As to quaternary structure, homodimer. Cu cation serves as cofactor. The cofactor is Zn(2+).

It localises to the cytoplasm. It carries out the reaction 2 superoxide + 2 H(+) = H2O2 + O2. In terms of biological role, destroys radicals which are normally produced within the cells and which are toxic to biological systems. The sequence is that of Superoxide dismutase [Cu-Zn] (SODC) from Brugia pahangi (Filarial nematode worm).